Consider the following 208-residue polypeptide: dITP/XTP pyrophosphatase (208 aa).

Residue 17 to 22 (SNNPGK) participates in substrate binding. Mg(2+) contacts are provided by Asp-49 and Asp-78. Asp-78 functions as the Proton acceptor in the catalytic mechanism. Residues Ser-79, 164–167 (FGYD), Lys-187, and 192–193 (HR) each bind substrate.

It belongs to the HAM1 NTPase family. As to quaternary structure, homodimer. Mg(2+) serves as cofactor.

It carries out the reaction XTP + H2O = XMP + diphosphate + H(+). The enzyme catalyses dITP + H2O = dIMP + diphosphate + H(+). It catalyses the reaction ITP + H2O = IMP + diphosphate + H(+). Its function is as follows. Pyrophosphatase that catalyzes the hydrolysis of nucleoside triphosphates to their monophosphate derivatives, with a high preference for the non-canonical purine nucleotides XTP (xanthosine triphosphate), dITP (deoxyinosine triphosphate) and ITP. Seems to function as a house-cleaning enzyme that removes non-canonical purine nucleotides from the nucleotide pool, thus preventing their incorporation into DNA/RNA and avoiding chromosomal lesions. In Burkholderia pseudomallei (strain K96243), this protein is dITP/XTP pyrophosphatase.